Here is a 388-residue protein sequence, read N- to C-terminus: GDP-4-keto-6-deoxy-D-mannose 3-dehydratase (388 aa).

Position 26–29 (26–29) interacts with GDP-4-dehydro-alpha-D-rhamnose; the sequence is KMFT. Residues 49-69 traverse the membrane as a helical segment; sequence YAVMVSSGSTANLLMIAALFF. Residues 56–57, tryptophan 88, glutamate 162, and serine 183 contribute to the pyridoxal 5'-phosphate site; that span reads GS. Histidine 188 serves as the catalytic Proton donor/acceptor. Histidine 215 contacts L-glutamate. Residue arginine 219 coordinates GDP-4-dehydro-alpha-D-rhamnose. Asparagine 248 contacts pyridoxal 5'-phosphate. An L-glutamate-binding site is contributed by arginine 250. Glutamate 329 is a GDP-4-dehydro-alpha-D-rhamnose binding site.

It belongs to the DegT/DnrJ/EryC1 family. As to quaternary structure, homodimer. Requires pyridoxal 5'-phosphate as cofactor.

It localises to the cell membrane. The catalysed reaction is GDP-4-dehydro-alpha-D-rhamnose + L-glutamate = GDP-4-dehydro-3,6-dideoxy-alpha-D-mannose + 2-oxoglutarate + NH4(+). It participates in nucleotide-sugar metabolism; GDP-L-colitose biosynthesis. Involved in the biosynthesis of L-colitose, a 3,6-dideoxyhexose present in the O-antigen region of lipopolysaccharides (LPS), where it serves as an antigenic determinant and is vital for bacterial defense and survival. Catalyzes the removal of the C3'-hydroxyl group from GDP-4-keto-6-deoxy-D-mannose via a combined transamination-deoxygenation reaction. The catalysis is initiated by a transamination step in which pyridoxal 5'-phosphate (PLP) is converted to pyridoxamine 5'-phosphate (PMP) in the presence of L-glutamate. This coenzyme then forms a Schiff base with GDP-4-keto-6-deoxy-D-mannose and the resulting adduct undergoes a PMP-mediated beta-dehydration reaction to give a sugar enamine intermediate, which after tautomerization and hydrolysis to release ammonia yields GDP-4-keto-3,6-dideoxy-D-mannose as a product. In vitro, is able to catalyze the formation of GDP-4-keto-3,6-dideoxymannose using GDP-perosamine rather than GDP-4-keto-6-deoxymannose as a substrate, with no need of glutamate. The protein is GDP-4-keto-6-deoxy-D-mannose 3-dehydratase of Escherichia coli O55:H7 (strain CB9615 / EPEC).